Reading from the N-terminus, the 178-residue chain is uncharacterized protein (178 aa).

This is an uncharacterized protein from Saccharomyces cerevisiae (strain ATCC 204508 / S288c) (Baker's yeast).